The primary structure comprises 170 residues: Urease accessory protein UreE (170 aa).

It belongs to the UreE family.

It is found in the cytoplasm. Involved in urease metallocenter assembly. Binds nickel. Probably functions as a nickel donor during metallocenter assembly. The protein is Urease accessory protein UreE of Helicobacter pylori (strain ATCC 700392 / 26695) (Campylobacter pylori).